The sequence spans 569 residues: Glucose-6-phosphate isomerase, cytosolic 1A (569 aa).

Glu360 functions as the Proton donor in the catalytic mechanism. Catalysis depends on residues His391 and Lys516.

Belongs to the GPI family. In terms of assembly, homodimer.

The protein localises to the cytoplasm. The enzyme catalyses alpha-D-glucose 6-phosphate = beta-D-fructose 6-phosphate. It participates in carbohydrate degradation; glycolysis; D-glyceraldehyde 3-phosphate and glycerone phosphate from D-glucose: step 2/4. This Clarkia lewisii (Farewell-to-spring) protein is Glucose-6-phosphate isomerase, cytosolic 1A (PGIC1-A).